A 299-amino-acid chain; its full sequence is Taste receptor type 2 member 4 (299 aa).

The Extracellular segment spans residues Met-1–Ala-9. Residues Ile-10 to Val-30 form a helical membrane-spanning segment. Residues Asn-31 to Arg-46 are Cytoplasmic-facing. The helical transmembrane segment at Ile-47–Ile-67 threads the bilayer. Residues Tyr-68 to Ser-81 are Extracellular-facing. The helical transmembrane segment at Ala-82–Leu-102 threads the bilayer. The Cytoplasmic segment spans residues Asn-103 to Arg-131. The chain crosses the membrane as a helical span at residues Leu-132–Gln-152. Topologically, residues Ala-153 to Glu-172 are extracellular. 2 N-linked (GlcNAc...) asparagine glycosylation sites follow: Asn-164 and Asn-165. A helical transmembrane segment spans residues Gly-173–Val-193. The Cytoplasmic portion of the chain corresponds to Thr-194–Lys-230. Residues Leu-231–Leu-251 traverse the membrane as a helical segment. The Extracellular portion of the chain corresponds to Pro-252–Lys-262. The helical transmembrane segment at Ser-263–Thr-283 threads the bilayer. Topologically, residues His-284–Lys-299 are cytoplasmic.

Belongs to the G-protein coupled receptor T2R family.

It is found in the membrane. The protein resides in the cell projection. It localises to the cilium membrane. Gustducin-coupled receptor implicated in the perception of bitter compounds in the oral cavity and the gastrointestinal tract. Signals through PLCB2 and the calcium-regulated cation channel TRPM5. In airway epithelial cells, binding of denatonium increases the intracellular calcium ion concentration and stimulates ciliary beat frequency. This chain is Taste receptor type 2 member 4 (TAS2R4), found in Pan paniscus (Pygmy chimpanzee).